Here is a 375-residue protein sequence, read N- to C-terminus: Stomatin-2 (375 aa).

Positions 1 to 75 are disordered; that stretch reads MKTQPSEESA…IPVPTGQPRG (75 aa). A compositionally biased stretch (low complexity) spans 11–50; it reads SPAPVNPGNSGNSGNRRASSTRISFSDQLDGGDSGDSSSN. The helical transmembrane segment at 120–140 threads the bilayer; the sequence is GLGFCGWFLMGLSWIMVISTF.

This sequence belongs to the band 7/mec-2 family.

It localises to the membrane. May be involved in cilia-related function. The sequence is that of Stomatin-2 (sto-2) from Caenorhabditis elegans.